A 28-amino-acid chain; its full sequence is CKGKGAPCTRLMYDCCHGSCSSSKGRCG.

3 cysteine pairs are disulfide-bonded: cysteine 1/cysteine 16, cysteine 8/cysteine 20, and cysteine 15/cysteine 27. Proline 7 carries the 4-hydroxyproline; partial modification. A Methionine sulfoxide modification is found at methionine 12. Cysteine 27 carries the cysteine amide modification.

Belongs to the conotoxin O1 superfamily. As to expression, expressed by the venom duct.

It localises to the secreted. Omega-conotoxins act at presynaptic membranes, they bind and block voltage-gated calcium channels (Cav). This toxin blocks N-type calcium channels (Cav2.2/CACNA1B) with high potency. Unexpectedly, it does not show any blocking activity at amphibian neuromuscular junction. In vivo, when intracerebroventricularly injected into mice causes shaking activity, and, at higher doses, causes mild tremors. When injected intramuscularly into fish, it causes paralysis, and, at higher doses, causes death. This Conus consors (Singed cone) protein is Omega-conotoxin-like CnVIIH.